We begin with the raw amino-acid sequence, 343 residues long: Phenylalanine--tRNA ligase alpha subunit (343 aa).

Residue Glu264 participates in Mg(2+) binding.

The protein belongs to the class-II aminoacyl-tRNA synthetase family. Phe-tRNA synthetase alpha subunit type 1 subfamily. In terms of assembly, tetramer of two alpha and two beta subunits. Mg(2+) is required as a cofactor.

The protein localises to the cytoplasm. It catalyses the reaction tRNA(Phe) + L-phenylalanine + ATP = L-phenylalanyl-tRNA(Phe) + AMP + diphosphate + H(+). The chain is Phenylalanine--tRNA ligase alpha subunit from Azoarcus sp. (strain BH72).